The chain runs to 83 residues: uncharacterized protein (83 aa).

Residues 58 to 80 (YWGYGAAYGISLGLIAGVALAGL) traverse the membrane as a helical segment.

It is found in the membrane. This is an uncharacterized protein from Bacillus subtilis (strain 168).